Reading from the N-terminus, the 78-residue chain is RNA-binding protein Hfq (78 aa).

The Sm domain maps to 10–69; sequence DPFLNALRREHVPVSIYLVNGIKLQGQVESFDQYVVLLKNTVTQMVYKHAISTVVPARPV.

The protein belongs to the Hfq family. In terms of assembly, homohexamer.

Functionally, RNA chaperone that binds small regulatory RNA (sRNAs) and mRNAs to facilitate mRNA translational regulation in response to envelope stress, environmental stress and changes in metabolite concentrations. Also binds with high specificity to tRNAs. The chain is RNA-binding protein Hfq from Dechloromonas aromatica (strain RCB).